Here is a 159-residue protein sequence, read N- to C-terminus: NADH-quinone oxidoreductase subunit I (159 aa).

4Fe-4S ferredoxin-type domains lie at 51 to 80 and 90 to 119; these read RRYE…IEAD and TRYD…EGPN. The [4Fe-4S] cluster site is built by C60, C63, C66, C70, C99, C102, C105, and C109.

The protein belongs to the complex I 23 kDa subunit family. NDH-1 is composed of 14 different subunits. Subunits NuoA, H, J, K, L, M, N constitute the membrane sector of the complex. [4Fe-4S] cluster serves as cofactor.

The protein localises to the cell inner membrane. The enzyme catalyses a quinone + NADH + 5 H(+)(in) = a quinol + NAD(+) + 4 H(+)(out). In terms of biological role, NDH-1 shuttles electrons from NADH, via FMN and iron-sulfur (Fe-S) centers, to quinones in the respiratory chain. The immediate electron acceptor for the enzyme in this species is believed to be ubiquinone. Couples the redox reaction to proton translocation (for every two electrons transferred, four hydrogen ions are translocated across the cytoplasmic membrane), and thus conserves the redox energy in a proton gradient. In Rickettsia conorii (strain ATCC VR-613 / Malish 7), this protein is NADH-quinone oxidoreductase subunit I.